A 189-amino-acid polypeptide reads, in one-letter code: Probable nicotinate-nucleotide adenylyltransferase (189 aa).

The protein belongs to the NadD family.

It catalyses the reaction nicotinate beta-D-ribonucleotide + ATP + H(+) = deamido-NAD(+) + diphosphate. It functions in the pathway cofactor biosynthesis; NAD(+) biosynthesis; deamido-NAD(+) from nicotinate D-ribonucleotide: step 1/1. In terms of biological role, catalyzes the reversible adenylation of nicotinate mononucleotide (NaMN) to nicotinic acid adenine dinucleotide (NaAD). This Bacillus cytotoxicus (strain DSM 22905 / CIP 110041 / 391-98 / NVH 391-98) protein is Probable nicotinate-nucleotide adenylyltransferase.